A 603-amino-acid chain; its full sequence is Zinc finger protein 415 (603 aa).

The C2H2-type 1; degenerate zinc-finger motif lies at 264-286 (YRYIECDKALNHGSHMTVRQVSH). 11 consecutive C2H2-type zinc fingers follow at residues 292-314 (YKCDLCGKVFSQKSNLARHWRVH), 320-342 (YKCNECDRSFSRNSCLALHRRVH), 348-370 (YKCYECDKVFSRNSCLALHQKTH), 376-398 (YTCKECGKAFSVRSTLTNHQVIH), 404-426 (YKCNECGKVFSQTSSLATHQRIH), 432-454 (YKCNECGKVFSQTSSLARHWRIH), 460-482 (YKCNECGKVFSYNSHLASHRRVH), 488-510 (YKCNECGKAFSVHSNLTTHQVIH), 516-538 (YKCNQCGKGFSVHSSLTTHQVIH), 544-566 (YKCNECGKSFSVRPNLTRHQIIH), and 572-594 (YKCSDCGKSFSVRPNLFRHQIIH).

As to expression, expressed in all tissues examined. Isoforms are differentially expressed. Isoform 3 and isoform 5 were highly expressed, isoform 4 moderately expressed, isoform 2 lower expression, the lowest expression level was seem with isoform 1.

It is found in the nucleus. The protein localises to the cytoplasm. Involved in transcriptional regulation. Transcriptional activity differed among the various isoforms. All isoforms except isoform 3 seem to suppresses the transcriptional activities of AP-1 and p53/TP53. This is Zinc finger protein 415 (ZNF415) from Homo sapiens (Human).